The chain runs to 187 residues: Alpha-D-galactose-binding lectin (187 aa).

The first 37 residues, 1 to 37 (MTFAKQSCFNSIILLSIATSYFKIGHKISELGNRIEK), serve as a signal peptide directing secretion. Position 39 is an N-acetylthreonine (T39). N-acetyl-alpha-D-galactosamine-binding positions include 53–56 (HPKG), D64, 72–76 (DIHER), H101, G104, E112, 120–122 (DRH), H145, G148, E156, and 164–166 (DKH).

As to quaternary structure, homodimer. In terms of tissue distribution, highest expression in the posterior part of the mantle. Highly expressed in gills and to a lesser extent in mid mantle and anterior muscle. Lowest expression in digestive gland and posterior adductor muscle. Scarcely detectable in hemocytes.

Agglutination of E.coli is inhibited by alpha-galactoside melibiose, but not by beta-galactoside lactose. Alpha-D-galactose-binding lectin. Binds D-GalNAc, but not glucose or its derivatives. Has hemagglutinating activity towards rabbit erythrocytes. Agglutinates bacteria. Has bacteriostatic activity on both Gram-positive and Gram-negative bacteria including B.subtilis, S.aureus, E.coli and V.parahaemolyticus, respectively. Has a dose-dependent cytotoxic effect on the human globotriaosylceramide (Gb3)-expressing Epstein-Barr virus (EBV)-positive Burkitt's lymphoma (Raji) cell line. Has dose-dependent cytotoxic effect on another Burkitt's lymphoma (Ramos) cell line, which does not possess the EBV genome, but also expresses Gb3. Binds to Gb3 in these cells leading to phosphorylation of MEK1/2, ERK1/2, JNK and p38 kinase, activation of caspase-9/3 and to expression of p21 and tumor necrosis factor (TNF)-alpha. No cytotoxic effect on the human chronic myelogenous leukemia (K-562) cell line, which does not express Gb3. May be involved in innate immunity acting as an antibacterial or antifungal agent. May be a pattern recognition receptor (PRR) involved in recognition of glycans found on parasitic or symbiotic microorganisms. The sequence is that of Alpha-D-galactose-binding lectin from Mytilus galloprovincialis (Mediterranean mussel).